We begin with the raw amino-acid sequence, 692 residues long: Transforming growth factor beta activator LRRC33 (692 aa).

The first 24 residues, 1-24 (MEFLPLWLCLGFHFLIVEWRSGRG), serve as a signal peptide directing secretion. Topologically, residues 25-650 (TATAASQGGC…CKWGQVDTGL (626 aa)) are extracellular. The region spanning 29–56 (ASQGGCKVVDRVADCRSLNLASVPSGLP) is the LRRNT domain. LRR repeat units follow at residues 58–79 (HSRM…SLQA), 82–103 (RLED…AFHE), 106–127 (HLQN…SATA), 133–155 (RLRR…MLQN), 158–179 (SLEV…VFEG), 182–203 (RLVE…AFDG), 206–227 (ELRR…SLTQ), 228–239 (LRFLNVSYNILE), 251–272 (ELEI…PQCG), and 273–294 (KLHT…YNTS). Asn74 carries an N-linked (GlcNAc...) asparagine glycan. Asn155 is a glycosylation site (N-linked (GlcNAc...) asparagine). N-linked (GlcNAc...) asparagine glycosylation is present at Asn232. Residues Asn292, Asn309, and Asn312 are each glycosylated (N-linked (GlcNAc...) asparagine). LRR repeat units follow at residues 329–350 (ALRF…FLKK), 353–374 (SLSH…EHEP), 377–398 (ALTE…PGLT), 403–424 (NLRV…LFHS), 427–448 (SITT…VPLD), 463–484 (SLRS…PFQG), 486–507 (SLTH…SPLS), 512–533 (TLQV…MDFS), 537–558 (NLRE…KGSS), 559–580 (ALQT…VVSE), and 585–605 (GLQT…EGWG). A glycan (N-linked (GlcNAc...) asparagine) is linked at Asn408. Asn500 carries N-linked (GlcNAc...) asparagine glycosylation. The region spanning 606-643 (ALQHFKTIADLSMVTCNLSSKIIRVVELPEGIPQDCKW) is the LRRCT domain. Residue Asn622 is glycosylated (N-linked (GlcNAc...) asparagine). The helical transmembrane segment at 651-671 (FYLVLILPSCLTLLVASTVIF) threads the bilayer. Residues 672-692 (LTFKKPLLQVIKSRCHWSSIY) lie on the Cytoplasmic side of the membrane.

The protein belongs to the LRRC32/LRRC33 family. As to quaternary structure, interacts (via LRR repeats) with TLR2, TLR3, TLR4, TLR9 and probably other Toll-like receptors. Interacts with CYBB/NOX2; the interaction is direct. Interacts with TGFB1; associates via disulfide bonds with the Latency-associated peptide chain (LAP) regulatory chain of TGFB1, leading to regulate activation of TGF-beta-1.

Its subcellular location is the cell membrane. The protein resides in the endoplasmic reticulum membrane. Its function is as follows. Key regulator of transforming growth factor beta-1 (TGFB1) specifically required for microglia function in the nervous system. Required for activation of latent TGF-beta-1 in macrophages and microglia: associates specifically via disulfide bonds with the Latency-associated peptide (LAP), which is the regulatory chain of TGFB1, and regulates integrin-dependent activation of TGF-beta-1. TGF-beta-1 activation mediated by LRRC33/NRROS is highly localized: there is little spreading of TGF-beta-1 activated from one microglial cell to neighboring microglia, suggesting the existence of localized and selective activation of TGF-beta-1 by LRRC33/NRROS. Indirectly plays a role in Toll-like receptor (TLR) signaling: ability to inhibit TLR-mediated NF-kappa-B activation and cytokine production is probably a consequence of its role in TGF-beta-1 signaling. This chain is Transforming growth factor beta activator LRRC33, found in Rattus norvegicus (Rat).